Consider the following 206-residue polypeptide: Protein Mabiki (206 aa).

Positions 54–77 (FSDQDADFPPLPKRRRLGSSSSSV) are disordered.

Functionally, plays a role in inducing apoptosis and is involved in the repair of head patterning defects in the embryo caused by extra maternal copies of the homeotic gene bicoid. In Drosophila melanogaster (Fruit fly), this protein is Protein Mabiki.